The chain runs to 322 residues: Peroxisomal adenine nucleotide carrier 1 (322 aa).

Solcar repeat units follow at residues 5 to 94 (LESV…FKRV), 104 to 184 (IGTK…LKQH), and 202 to 298 (LSAF…ITAT). 6 helical membrane passes run 8–28 (VSEA…LYPL), 104–124 (IGTK…SVLI), 158–178 (FDGL…YTVF), 201–221 (VLSA…ATVL), 254–274 (IPGV…FKGL), and 286–306 (ALLL…ILAI).

Belongs to the mitochondrial carrier (TC 2.A.29) family. In terms of tissue distribution, expressed in stamens, pollen grains, seeds, leaves, cotyledons, roots, stems, flowers, hypocotyls and siliques.

It is found in the peroxisome membrane. Peroxisomal adenine nucleotide transporter catalyzing the counterexchange of ATP with AMP. ATP is needed by reactions that generate acyl-CoA for peroxisomal fatty acid beta-oxidation during postgerminative growth. Required for the beta-oxidation reactions involved in auxin biosynthesis and for the conversion of seed-reserved triacylglycerols into sucrose that is necessary for growth before the onset of photosynthesis. This Arabidopsis thaliana (Mouse-ear cress) protein is Peroxisomal adenine nucleotide carrier 1 (PNC1).